Here is a 200-residue protein sequence, read N- to C-terminus: Holliday junction branch migration complex subunit RuvA (200 aa).

The segment at 1 to 63 (MIASVRGEVL…EDSMTLYGFP (63 aa)) is domain I. Positions 64–142 (DSESKELFGL…AVGSTSGAVP (79 aa)) are domain II. The segment at 142-146 (PLGAG) is flexible linker. A domain III region spans residues 147 to 200 (GGGSVRDQIVEALVGLGFPAKQAEQATDSVLAEAPESTTSSALRSALSLLGKTR).

It belongs to the RuvA family. Homotetramer. Forms an RuvA(8)-RuvB(12)-Holliday junction (HJ) complex. HJ DNA is sandwiched between 2 RuvA tetramers; dsDNA enters through RuvA and exits via RuvB. An RuvB hexamer assembles on each DNA strand where it exits the tetramer. Each RuvB hexamer is contacted by two RuvA subunits (via domain III) on 2 adjacent RuvB subunits; this complex drives branch migration. In the full resolvosome a probable DNA-RuvA(4)-RuvB(12)-RuvC(2) complex forms which resolves the HJ.

The protein resides in the cytoplasm. The RuvA-RuvB-RuvC complex processes Holliday junction (HJ) DNA during genetic recombination and DNA repair, while the RuvA-RuvB complex plays an important role in the rescue of blocked DNA replication forks via replication fork reversal (RFR). RuvA specifically binds to HJ cruciform DNA, conferring on it an open structure. The RuvB hexamer acts as an ATP-dependent pump, pulling dsDNA into and through the RuvAB complex. HJ branch migration allows RuvC to scan DNA until it finds its consensus sequence, where it cleaves and resolves the cruciform DNA. This chain is Holliday junction branch migration complex subunit RuvA, found in Rhodococcus opacus (strain B4).